The following is a 242-amino-acid chain: Histone-lysine N-methyltransferase set-1 (242 aa).

The disordered stretch occupies residues 1–61; the sequence is MKVAAKKLAT…TRSRKGVSVK (61 aa). A compositionally biased stretch (low complexity) spans 30 to 43; the sequence is SENPSSLASHSSSS. The SET domain occupies 104–226; the sequence is RLLEVYKDVV…QGEELLYDYG (123 aa). Residues 114-116, Tyr159, and 186-187 contribute to the S-adenosyl-L-methionine site; these read KGR and NH.

The protein belongs to the class V-like SAM-binding methyltransferase superfamily. Histone-lysine methyltransferase family. PR/SET subfamily. In embryos, it is expressed ubiquitously. In late embryos, it is expressed in hypodermal seam cells. In L3 and L4 larvae and thereafter, it is expressed in vulval precursor cells. In adult males, it is also expressed in 6 unidentified posterior cells.

It localises to the nucleus. The protein resides in the chromosome. It catalyses the reaction L-lysyl(20)-[histone H4] + S-adenosyl-L-methionine = N(6)-methyl-L-lysyl(20)-[histone H4] + S-adenosyl-L-homocysteine + H(+). In terms of biological role, histone methyltransferase that specifically monomethylates 'Lys-20' of histone H4 (H4K20me1). H4K20me1 is enriched on hermaphrodite X chromosomes and during mitosis. Involved in dosage compensation by repression of X-linked gene expression in hermaphrodites. Plays a role in growth and body fat regulation downstream of the TOR complex 2 pathway. The protein is Histone-lysine N-methyltransferase set-1 (set-1) of Caenorhabditis elegans.